Here is a 205-residue protein sequence, read N- to C-terminus: Protein Nef (205 aa).

Glycine 2 carries the N-myristoyl glycine; by host lipid modification. Residue serine 6 is modified to Phosphoserine; by host. Residues 62-65 (DNEE) are acidic; interacts with host PACS1 and PACS2; stabilizes the interaction of NEF/MHC-I with host AP1M1; necessary for MHC-I internalization. The interval 69 to 78 (PVRPQVPTRP) is SH3-binding; interaction with Src family tyrosine kinases. A PxxP; stabilizes the interaction of NEF/MHC-I with host AP1M1; necessary for MHC-I internalization motif is present at residues 72–75 (PQVP). The segment at 108–124 (EILDLWVYHTQGFFPDW) is mediates dimerization, Nef-PTE1 interaction. Positions 148–180 (LTEEQVEQANEGDNNCLLHPICQHGMEDEDKEV) are binding to ATP6V1H. Positions 164–165 (LL) match the Dileucine internalization motif; necessary for CD4 internalization motif. The short motif at 174-175 (ED) is the Diacidic; necessary for CD4 internalization element.

This sequence belongs to the lentivirus primate group Nef protein family. In terms of assembly, monomer; cytosolic form. Homodimer; membrane bound form. Interacts with Nef associated p21-activated kinase (PAK2); this interaction activates PAK2. Associates with the Nef-MHC-I-AP1 complex; this complex is required for MHC-I internalization. Interacts (via C-terminus) with host PI3-kinase. Interacts with host PACS1; this interaction seems to be weak. Interacts with host PACS2. Interacts with host LCK and MAPK3; these interactions inhibit the kinase activity of the latter. Interacts with host ATP6V1H; this interaction may play a role in CD4 endocytosis. Associates with the CD4-Nef-AP2 complex; this complex is required for CD4 internalization. Interacts with host AP2 subunit alpha and AP2 subunit sigma2. Interacts with TCR-zeta chain; this interaction up-regulates the Fas ligand (FasL) surface expression. Interacts with host HCK, LYN, and SRC; these interactions activate the Src family kinases. Interacts with MAP3K5; this interaction inhibits the Fas and TNFR-mediated death signals. Interacts with beta-COP and PTE1. Interacts with human RACK1; this increases Nef phosphorylation by PKC. Interacts with TP53; this interaction decreases the half-life of TP53, protecting the infected cell against p53-mediated apoptosis. In terms of processing, the virion-associated Nef proteins are cleaved by the viral protease to release the soluble C-terminal core protein. Nef is probably cleaved concomitantly with viral structural proteins on maturation of virus particles. Post-translationally, myristoylated. Phosphorylated on serine residues, probably by host PKCdelta and theta.

It localises to the host cell membrane. The protein resides in the virion. Its subcellular location is the secreted. The protein localises to the host Golgi apparatus membrane. Factor of infectivity and pathogenicity, required for optimal virus replication. Alters numerous pathways of T-lymphocyte function and down-regulates immunity surface molecules in order to evade host defense and increase viral infectivity. Alters the functionality of other immunity cells, like dendritic cells, monocytes/macrophages and NK cells. In terms of biological role, in infected CD4(+) T-lymphocytes, down-regulates the surface MHC-I, mature MHC-II, CD4, CD28, CCR5 and CXCR4 molecules. Mediates internalization and degradation of host CD4 through the interaction of with the cytoplasmic tail of CD4, the recruitment of AP-2 (clathrin adapter protein complex 2), internalization through clathrin coated pits, and subsequent transport to endosomes and lysosomes for degradation. Diverts host MHC-I molecules to the trans-Golgi network-associated endosomal compartments by an endocytic pathway to finally target them for degradation. MHC-I down-regulation may involve AP-1 (clathrin adapter protein complex 1) or possibly Src family kinase-ZAP70/Syk-PI3K cascade recruited by PACS2. In consequence infected cells are masked for immune recognition by cytotoxic T-lymphocytes. Decreasing the number of immune receptors also prevents reinfection by more HIV particles (superinfection). Down-regulates host SERINC3 and SERINC5 thereby excluding these proteins from the viral particles. Virion infectivity is drastically higher when SERINC3 or SERINC5 are excluded from the viral envelope, because these host antiviral proteins impair the membrane fusion event necessary for subsequent virion penetration. Its function is as follows. Bypasses host T-cell signaling by inducing a transcriptional program nearly identical to that of anti-CD3 cell activation. Interaction with TCR-zeta chain up-regulates the Fas ligand (FasL). Increasing surface FasL molecules and decreasing surface MHC-I molecules on infected CD4(+) cells send attacking cytotoxic CD8+ T-lymphocytes into apoptosis. Functionally, plays a role in optimizing the host cell environment for viral replication without causing cell death by apoptosis. Protects the infected cells from apoptosis in order to keep them alive until the next virus generation is ready to strike. Inhibits the Fas and TNFR-mediated death signals by blocking MAP3K5/ASK1. Decreases the half-life of TP53, protecting the infected cell against p53-mediated apoptosis. Inhibits the apoptotic signals regulated by the Bcl-2 family proteins through the formation of a Nef/PI3-kinase/PAK2 complex that leads to activation of PAK2 and induces phosphorylation of host BAD. Extracellular Nef protein targets CD4(+) T-lymphocytes for apoptosis by interacting with CXCR4 surface receptors. This chain is Protein Nef, found in Simian immunodeficiency virus (isolate CPZ GAB1) (SIV-cpz).